The primary structure comprises 211 residues: DNA-directed RNA polymerases I, II, and III subunit RPABC1 (211 aa).

Belongs to the archaeal Rpo5/eukaryotic RPB5 RNA polymerase subunit family. As to quaternary structure, component of the RNA polymerase I (Pol I), RNA polymerase II (Pol II) and RNA polymerase III (Pol III) complexes consisting of at least 13, 12 and 17 subunits, respectively. In RNA Pol II, this subunit is present in 2-fold molar excess over the other subunits.

The protein localises to the nucleus. Its function is as follows. DNA-dependent RNA polymerase catalyzes the transcription of DNA into RNA using the four ribonucleoside triphosphates as substrates. Common component of RNA polymerases I, II and III which synthesize ribosomal RNA precursors, mRNA precursors and many functional non-coding RNAs, and small RNAs, such as 5S rRNA and tRNAs, respectively. Pol II is the central component of the basal RNA polymerase II transcription machinery. Pols are composed of mobile elements that move relative to each other. In Pol II, RPB5 is part of the lower jaw surrounding the central large cleft and thought to grab the incoming DNA template. Seems to be the major component in this process. The chain is DNA-directed RNA polymerases I, II, and III subunit RPABC1 (rpb-5) from Caenorhabditis elegans.